Consider the following 235-residue polypeptide: tRNA (guanine-N(1)-)-methyltransferase (235 aa).

S-adenosyl-L-methionine is bound by residues glycine 114 and 134-139 (IGDYIL).

Belongs to the RNA methyltransferase TrmD family. As to quaternary structure, homodimer.

Its subcellular location is the cytoplasm. The enzyme catalyses guanosine(37) in tRNA + S-adenosyl-L-methionine = N(1)-methylguanosine(37) in tRNA + S-adenosyl-L-homocysteine + H(+). In terms of biological role, specifically methylates guanosine-37 in various tRNAs. In Ehrlichia canis (strain Jake), this protein is tRNA (guanine-N(1)-)-methyltransferase.